Reading from the N-terminus, the 3960-residue chain is Replicase polyprotein 1ab (3960 aa).

A C4-type; atypical zinc finger spans residues 8–28 (CTCTPNARVFMAEGQVYCTRC). The region spanning 69-180 (ECSPAGACWL…EDFCPFECAM (112 aa)) is the Peptidase C31 domain. A PCP1-alpha region spans residues 69–182 (ECSPAGACWL…FCPFECAMAT (114 aa)). Catalysis depends on for Nsp1-alpha papain-like cysteine proteinase activity residues cysteine 76 and histidine 146. Positions 199 to 200 (VS) are important for host EIF2AK2 inhibition. Residues 263 to 382 (DTVPEGNCWW…IFRFGSHKWY (120 aa)) form a PCP1-beta region. Residues 263-383 (DTVPEGNCWW…FRFGSHKWYG (121 aa)) form the Peptidase C32 domain. Residues cysteine 270 and histidine 339 each act as for Nsp1-beta papain-like cysteine proteinase activity in the active site. The segment at 426 to 513 (LKHYSPPAEG…GEHWTVTVTP (88 aa)) is OTU-like. Residues 428–535 (HYSPPAEGNC…QGCCGHKGGL (108 aa)) enclose the Peptidase C33 domain. Catalysis depends on for Nsp2 cysteine proteinase activity residues cysteine 437 and histidine 506. 3 disordered regions span residues 809–882 (RWTP…ATPS), 899–979 (TPLS…GVLG), and 1156–1213 (PLAF…GGGP). Positions 810–819 (WTPPPPPPKV) are enriched in pro residues. Helical transmembrane passes span 1266–1286 (LCLFLCYSYPAFGIAPLLGVF), 1296–1316 (GVFGCWLAFAVGLFKPVSDPV), 1345–1365 (SLVVGPVGLGLAILGRLLGGA), 1368–1388 (IWHFLLRLGIVADCILAGAYV), 1583–1603 (LMAALHVACSMALHMLAGIYV), 1650–1670 (ALVAGFGIQEIALVVLIFVSI), 1685–1705 (CVLLAIASYVWVPLTWLLCVF), and 1719–1739 (ILWLVFFLISVNMPSGILAMV). Residues 1266–1388 (LCLFLCYSYP…ADCILAGAYV (123 aa)) form an HD1 region. The tract at residues 1583–1745 (LMAALHVACS…LAMVLLVSLW (163 aa)) is HD2. Residues 1810-2013 (GAFRTRKPSL…ALLAAKPELE (204 aa)) enclose the Peptidase S32 domain. Catalysis depends on charge relay system; for 3C-like serine proteinase activity residues histidine 1848, aspartate 1873, and serine 1927. A run of 5 helical transmembrane segments spans residues 2012–2032 (LEGGLSTVQLLCVFFLLWRMM), 2060–2080 (FSFGMFVLSWLTPWSAQVLMI), 2092–2112 (WSLAFFSLGAVTGFVADLAAT), 2137–2157 (SPVPVITCGVVHLLAIILYLF), and 2164–2184 (HILVGDGVFSAAFFLRYFAEG). Residues 2036–2157 (WTPLVAVSFF…HLLAIILYLF (122 aa)) form an HD3 region. Residues 2329-2358 (PTPTPPPAPVPIPLPPKVLENGPNAWGDED) are disordered. A compositionally biased stretch (pro residues) spans 2330–2344 (TPTPPPAPVPIPLPP). In terms of domain architecture, NiRAN spans 2488-2650 (IIDKLQGLTK…LPYKLYPVRG (163 aa)). The 135-residue stretch at 2889–3023 (GRCLEADLAS…YAESPTMPNY (135 aa)) folds into the RdRp catalytic domain. An AV ZBD domain is found at 3144–3207 (GKKSRVCGYC…SPVGKGTSPL (64 aa)). Residues cysteine 3150, cysteine 3153, cysteine 3163, cysteine 3168, histidine 3171, histidine 3173, histidine 3175, histidine 3177, cysteine 3184, histidine 3186, cysteine 3193, and cysteine 3196 each coordinate Zn(2+). Positions 3264–3416 (ASTALLPTCK…VFDIMPQTQL (153 aa)) constitute a (+)RNA virus helicase ATP-binding domain. 3292–3299 (GPPGAGKT) lines the ATP pocket. The (+)RNA virus helicase C-terminal domain occupies 3417-3545 (KTIWRFGQNI…AVHCDGQLIV (129 aa)). The region spanning 3584–3680 (EGSSSPLPKV…LTKFVKGGAQ (97 aa)) is the AV-Nsp11N/CoV-Nsp15M domain. Residues 3682 to 3804 (LPETVFSTGR…MVWKDKTAYF (123 aa)) enclose the NendoU domain. Active-site residues include histidine 3713, histidine 3728, and lysine 3757.

It belongs to the arteriviridae polyprotein family. Nsp1-alpha papain-like: Interacts with host RNF31. As to quaternary structure, interacts with host EIF2AK2; this interaction occurs in host stress granules and leads to EIF2AK2 inhibition. Interacts with host G3BP1; this interaction probably plays a role in Nsp1-beta-mediated inhibition of host EIF2AK2. In terms of assembly, interacts with host DDX18; this interaction redistributes host DDX18 to the cytoplasm. Interacts with host IFITM1. As to quaternary structure, interacts with host DDX5. In terms of assembly, interacts with host OTULIN. Interacts with host LGALS3. Post-translationally, specific enzymatic cleavages in vivo by its own proteases yield mature proteins. Nsp1 is autocleaved into two subunits, Nsp1-alpha and Nsp1-beta. There are two alternative pathways for processing. Either nsp4-5 is cleaved, which represents the major pathway or the nsp5-6 and nsp6-7 are processed, which represents the minor pathway. The major pathway occurs when nsp2 acts as a cofactor for nsp4.

It localises to the host nucleus. The protein localises to the host cytoplasm. The protein resides in the host membrane. Its subcellular location is the host endoplasmic reticulum. It is found in the host perinuclear region. It carries out the reaction RNA(n) + a ribonucleoside 5'-triphosphate = RNA(n+1) + diphosphate. It catalyses the reaction ATP + H2O = ADP + phosphate + H(+). The enzyme catalyses Thiol-dependent hydrolysis of ester, thioester, amide, peptide and isopeptide bonds formed by the C-terminal Gly of ubiquitin (a 76-residue protein attached to proteins as an intracellular targeting signal).. The catalysed reaction is uridylyl-uridylyl-ribonucleotide-RNA = a 3'-end uridylyl-2',3'-cyclophospho-uridine-RNA + a 5'-end dephospho-ribonucleoside-RNA. Functionally, contains the activities necessary for the transcription of negative stranded RNA, leader RNA, subgenomic mRNAs and progeny virion RNA as well as proteinases responsible for the cleavage of the polyprotein into functional products. In terms of biological role, inhibits host IFN-beta production. Plays a role in the degradation of the host transcriptional activator CREBBP protein. The degradation of host CREBBP which is a key component of the IFN enhanceosome is likely responsible for the inhibition of interferon mediated by Nsp1-alpha. Also participates in the inhibition of host NF-kappa-B activation by counteracting LUBAC-dependent induction of NF-kappa-B. Reduces host NEMO ubiquitination by blocking the interaction between the two LUBAC complex components RNF31 and SHARPIN. Its function is as follows. Plays a role in blocking host mRNA nuclear export to the cytoplasm and subversion of host protein synthesis. Additionally, inhibits the interferon-activated JAK/STAT signal transduction by mediating the ubiquitination and subsequent proteasomal degradation of host KPNA1. Repurposes the host antiviral stress granules into a proviral platform to counteract the EIF2AK2/PKR restriction, thereby regulating the host inflammatory response. Multifunctional protein that acts as a viral protease and as a viral antagonist of host immune response. Cleaves the nsp2/nsp3 site in the viral polyprotein. Displays deubiquitinating activity that cleaves both ubiquitinated and ISGylated products and therefore inhibits ubiquitin and ISG15-dependent host innate immunity. Also deubiquinates host NFKBIA, thereby interfering with NFKBIA degradation and impairing subsequent NF-kappa-B activation. Functionally, plays a role in the inhibition of the immune response by interacting with host IFITM1. This interaction leads to the proteasomal degradation of the IFN-induced antiviral protein IFITM1. In terms of biological role, cleaves the majority of cleavage sites present in the C-terminus of the polyprotein. Triggers host apoptosis through caspase-3, -8, and -9 activations. Subverts host innate immune responses through its protease activity. Targets the NF-kappa-B essential modulator NEMO and mediates its cleavage. Blocks host interferon beta induction and downstream signaling by cleaving mitochondrial MAVS, dislodging it from the mitochondria. Impairs host defense by cleaving host mRNA-decapping enzyme DCP1A to attenuate its antiviral activity. Its function is as follows. Plays a role in the initial induction of autophagosomes from host endoplasmic reticulum. Plays a role in the inhibition of host STAT3 signaling pathway by inducing the degradation of STAT3. Functionally, responsible for replication and transcription of the viral RNA genome. In terms of biological role, displays RNA and DNA duplex-unwinding activities with 5' to 3' polarity. Its function is as follows. Plays a role in viral transcription/replication and prevents the simultaneous activation of host cell dsRNA sensors, such as MDA5/IFIH1, OAS, PKR and NLRP3 inflammasome. Acts by degrading the 5'-polyuridines generated during replication of the poly(A) region of viral genomic and subgenomic RNAs. Catalyzes a two-step reaction in which a 2'3'-cyclic phosphate (2'3'-cP) is first generated by 2'-O transesterification, which is then hydrolyzed to a 3'-phosphate (3'-P). If not degraded, poly(U) RNA would hybridize with poly(A) RNA tails and activate host dsRNA sensors. Also plays a role in the inhibition of host type I interferon production by recruiting host OTULIN to promote removal of linear ubiquitination targeting host NEMO. The protein is Replicase polyprotein 1ab (rep) of Porcine reproductive and respiratory syndrome virus (strain VR-2332) (PRRSV).